A 528-amino-acid chain; its full sequence is Glycerol kinase 5 (528 aa).

ATP-binding residues include Ser-28 and Ser-29. The glycerol site is built by Arg-98, Asp-275, and Gln-276. ATP contacts are provided by Thr-297, Gly-340, and Gly-440.

This sequence belongs to the FGGY kinase family.

The protein localises to the cytoplasm. It carries out the reaction glycerol + ATP = sn-glycerol 3-phosphate + ADP + H(+). The protein operates within polyol metabolism; glycerol degradation via glycerol kinase pathway; sn-glycerol 3-phosphate from glycerol: step 1/1. Its function is as follows. Skin-specific kinase that plays a key role in glycerol metabolism, catalyzing its phosphorylation to produce sn-glycerol 3-phosphate. Involved in skin-specific regulation of sterol regulatory element-binding protein (SREBP) processing and lipid biosynthesis. This Bos taurus (Bovine) protein is Glycerol kinase 5 (GK5).